A 427-amino-acid polypeptide reads, in one-letter code: Flotillin-1 (427 aa).

Residues serine 19, serine 163, and serine 385 each carry the phosphoserine modification. A Phosphothreonine modification is found at threonine 387.

This sequence belongs to the band 7/mec-2 family. Flotillin subfamily. Heterooligomeric complex of flotillin-1 and flotillin-2 and caveolin-1 and caveolin-2. Interacts with ECPAS.

It is found in the cell membrane. The protein localises to the endosome. Its subcellular location is the membrane. The protein resides in the caveola. It localises to the melanosome. It is found in the membrane raft. Functionally, may act as a scaffolding protein within caveolar membranes, functionally participating in formation of caveolae or caveolae-like vesicles. In Pongo abelii (Sumatran orangutan), this protein is Flotillin-1 (FLOT1).